Here is a 282-residue protein sequence, read N- to C-terminus: 3-methyl-2-oxobutanoate hydroxymethyltransferase (282 aa).

The Mg(2+) site is built by Asp45 and Asp84. Residues 45–46 (DS), Asp84, and Lys114 each bind 3-methyl-2-oxobutanoate. Position 116 (Glu116) interacts with Mg(2+). Residue Glu183 is the Proton acceptor of the active site.

Belongs to the PanB family. In terms of assembly, homodecamer; pentamer of dimers. The cofactor is Mg(2+).

Its subcellular location is the cytoplasm. The enzyme catalyses 3-methyl-2-oxobutanoate + (6R)-5,10-methylene-5,6,7,8-tetrahydrofolate + H2O = 2-dehydropantoate + (6S)-5,6,7,8-tetrahydrofolate. Its pathway is cofactor biosynthesis; (R)-pantothenate biosynthesis; (R)-pantoate from 3-methyl-2-oxobutanoate: step 1/2. In terms of biological role, catalyzes the reversible reaction in which hydroxymethyl group from 5,10-methylenetetrahydrofolate is transferred onto alpha-ketoisovalerate to form ketopantoate. This chain is 3-methyl-2-oxobutanoate hydroxymethyltransferase, found in Syntrophobacter fumaroxidans (strain DSM 10017 / MPOB).